The primary structure comprises 37 residues: Toxin Bcg III 28.78 (37 aa).

Cys-6 and Cys-31 are oxidised to a cystine.

It is found in the secreted. The protein localises to the nematocyst. This chain is Toxin Bcg III 28.78, found in Bunodosoma cangicum (Sea anemone).